The following is an 87-amino-acid chain: uncharacterized protein (87 aa).

The protein to B.subtilis XkdR.

This is an uncharacterized protein from Bacillus subtilis (strain 168).